Consider the following 416-residue polypeptide: Serine/threonine-protein kinase 26 (416 aa).

A2 carries the post-translational modification N-acetylalanine. Residue S4 is modified to Phosphoserine. The Protein kinase domain maps to 24–274 (FTKLERIGKG…AKELLKHKFI (251 aa)). ATP is bound by residues 30–38 (IGKGSFGEV) and K53. D144 serves as the catalytic Proton acceptor. T178 carries the post-translational modification Phosphothreonine; by autocatalysis. Positions 296–343 (AEGHSDEESDSEGSDSESSSRESNPHPEWSFTTVRKKPDPKKLQNGEE) are disordered. A phosphoserine mark is found at S300, S304, S306, S309, and S325. Residues T327 and T328 each carry the phosphothreonine modification. Residues 331-340 (KKPDPKKLQN) are compositionally biased toward basic and acidic residues.

This sequence belongs to the protein kinase superfamily. STE Ser/Thr protein kinase family. STE20 subfamily. As to quaternary structure, homodimer. Interacts with PDCD10. Interacts with GOLGA2. Interacts with CTTNBP2NL. Interacts with RIPOR1 (via C-terminus); this interaction occurs in a PDCD10-dependent and Rho-independent manner. Interacts with PDCD10; this interaction is required for the association of STK26 with RIPOR1. Part of the core of STRIPAK complexes composed of PP2A catalytic and scaffolding subunits, the striatins (PP2A regulatory subunits), the striatin-associated proteins MOB4, STRIP1 and STRIP2, PDCD10 and members of the STE20 kinases, such as STK24 and STK26. Mg(2+) is required as a cofactor.

It localises to the cytoplasm. It is found in the golgi apparatus. The catalysed reaction is L-seryl-[protein] + ATP = O-phospho-L-seryl-[protein] + ADP + H(+). The enzyme catalyses L-threonyl-[protein] + ATP = O-phospho-L-threonyl-[protein] + ADP + H(+). With respect to regulation, interaction with Golgi matrix protein GOLGA2 leads to autophosphorylation on Thr-178, possibly as a consequence of stabilization of dimer formation. May also be activated by C-terminal cleavage. Functionally, serine/threonine-protein kinase that acts as a mediator of cell growth. Modulates apoptosis. In association with STK24 negatively regulates Golgi reorientation in polarized cell migration upon RHO activation. Phosphorylates ATG4B at 'Ser-383', thereby increasing autophagic flux. Part of the striatin-interacting phosphatase and kinase (STRIPAK) complexes. STRIPAK complexes have critical roles in protein (de)phosphorylation and are regulators of multiple signaling pathways including Hippo, MAPK, nuclear receptor and cytoskeleton remodeling. Different types of STRIPAK complexes are involved in a variety of biological processes such as cell growth, differentiation, apoptosis, metabolism and immune regulation. In Mus musculus (Mouse), this protein is Serine/threonine-protein kinase 26.